A 314-amino-acid polypeptide reads, in one-letter code: tRNA dimethylallyltransferase (314 aa).

Residue glycine 12 to threonine 19 participates in ATP binding. Threonine 14–threonine 19 is a binding site for substrate. Interaction with substrate tRNA stretches follow at residues aspartate 37 to leucine 40, glutamine 161 to arginine 165, arginine 242 to arginine 247, and lysine 275 to arginine 282.

This sequence belongs to the IPP transferase family. In terms of assembly, monomer. Mg(2+) serves as cofactor.

The enzyme catalyses adenosine(37) in tRNA + dimethylallyl diphosphate = N(6)-dimethylallyladenosine(37) in tRNA + diphosphate. In terms of biological role, catalyzes the transfer of a dimethylallyl group onto the adenine at position 37 in tRNAs that read codons beginning with uridine, leading to the formation of N6-(dimethylallyl)adenosine (i(6)A). The sequence is that of tRNA dimethylallyltransferase from Mannheimia succiniciproducens (strain KCTC 0769BP / MBEL55E).